The sequence spans 137 residues: Translation initiation factor 2 subunit beta (137 aa).

It belongs to the eIF-2-beta/eIF-5 family. In terms of assembly, heterotrimer composed of an alpha, a beta and a gamma chain.

EIF-2 functions in the early steps of protein synthesis by forming a ternary complex with GTP and initiator tRNA. The protein is Translation initiation factor 2 subunit beta (eif2b) of Archaeoglobus fulgidus (strain ATCC 49558 / DSM 4304 / JCM 9628 / NBRC 100126 / VC-16).